A 163-amino-acid polypeptide reads, in one-letter code: MKIGIYPGSFDPVTLGHLDVIRRSAKIMDELVIGVLANSSKTPLFTVEERVKLLECVVKDIPNVKVVAFDGLTVDFAKKLGAKFLIRGLRAITDFEYELQIAQTNHKLDEEIDTVFFTTSVEYSYLSSSIVKEIASYGGDISKFVPNSIIQVIYDKYNGKRSE.

S9 provides a ligand contact to substrate. ATP-binding positions include 9–10 (SF) and H17. Substrate-binding residues include K41, T73, and R87. ATP-binding positions include 88–90 (GLR), E98, and 123–129 (YSYLSSS).

Belongs to the bacterial CoaD family. In terms of assembly, homohexamer. Requires Mg(2+) as cofactor.

Its subcellular location is the cytoplasm. The catalysed reaction is (R)-4'-phosphopantetheine + ATP + H(+) = 3'-dephospho-CoA + diphosphate. It participates in cofactor biosynthesis; coenzyme A biosynthesis; CoA from (R)-pantothenate: step 4/5. In terms of biological role, reversibly transfers an adenylyl group from ATP to 4'-phosphopantetheine, yielding dephospho-CoA (dPCoA) and pyrophosphate. The protein is Phosphopantetheine adenylyltransferase of Lachnoclostridium phytofermentans (strain ATCC 700394 / DSM 18823 / ISDg) (Clostridium phytofermentans).